Reading from the N-terminus, the 111-residue chain is Sulditoxin subunit B (111 aa).

Positions 1–19 (MKTLLLALAVVVLVCLGSA) are cleaved as a signal peptide. Residues 20–34 (NELGLGRQQIDRGRR) constitute a propeptide that is removed on maturation. Pyrrolidone carboxylic acid is present on Gln35. Intrachain disulfides connect Cys44–Cys68, Cys47–Cys55, Cys61–Cys87, Cys91–Cys102, and Cys103–Cys108.

It belongs to the three-finger toxin family. Ancestral subfamily. Boigatoxin sub-subfamily. Heterodimer of sulditoxin subunits A and B; probably disulfide-linked. In terms of tissue distribution, expressed by the venom gland.

Its subcellular location is the secreted. In terms of biological role, reptile-specific neurotoxin (tested on geckos). Inhibits nicotinic acetylcholine receptor (nAChR). Not toxic to mammals (tested on mice). This chain is Sulditoxin subunit B, found in Spilotes sulphureus (Amazon puffing snake).